A 262-amino-acid polypeptide reads, in one-letter code: 14-3-3 protein I (262 aa).

The protein belongs to the 14-3-3 family. As to quaternary structure, homodimer. Forms a complex composed of CDPK1, PKA regulatory subunit PKAr and 14-3-3I; the complex is formed in merozoites in response to low extracellular level of K(+) and may play a role in microneme secretion. Interacts with CDPK1 (when phosphorylated) in a Ca(2+)-independent manner; the interaction does not regulate CDPK1 catalytic activity but is required for merozoite invasion of host erythrocytes. Interacts with PKA regulatory subunit PKAr (when phosphorylated) in a Ca(2+)-dependent manner. Interacts with histone H3 (when phosphorylated at 'Ser-28' or when phosphorylated at 'Ser-28' and 'Ser-32').

It is found in the cell membrane. The protein resides in the cytoplasm. The protein localises to the nucleus. Its function is as follows. Adapter protein which binds to its partners, usually via a phosphoserine or phosphothreonine motif. Binding generally results in the modulation of the activity and/or cellular localization of the binding partner. Via its interaction with CDPK1 and PKAr, involved in merozoite microneme secretion and thus in merozoite invasion of host erythrocytes. This is 14-3-3 protein I from Plasmodium falciparum (isolate 3D7).